Here is a 339-residue protein sequence, read N- to C-terminus: Anthranilate phosphoribosyltransferase (339 aa).

5-phospho-alpha-D-ribose 1-diphosphate is bound by residues Gly81, 84 to 85, 91 to 94, 109 to 117, and Ser121; these read GD, NIST, and KHGNRAASS. Gly81 lines the anthranilate pocket. Position 93 (Ser93) interacts with Mg(2+). Asn112 lines the anthranilate pocket. Arg167 provides a ligand contact to anthranilate. Mg(2+)-binding residues include Asp226 and Glu227.

It belongs to the anthranilate phosphoribosyltransferase family. As to quaternary structure, homodimer. Mg(2+) is required as a cofactor.

The catalysed reaction is N-(5-phospho-beta-D-ribosyl)anthranilate + diphosphate = 5-phospho-alpha-D-ribose 1-diphosphate + anthranilate. The protein operates within amino-acid biosynthesis; L-tryptophan biosynthesis; L-tryptophan from chorismate: step 2/5. Its function is as follows. Catalyzes the transfer of the phosphoribosyl group of 5-phosphorylribose-1-pyrophosphate (PRPP) to anthranilate to yield N-(5'-phosphoribosyl)-anthranilate (PRA). The chain is Anthranilate phosphoribosyltransferase from Maricaulis maris (strain MCS10) (Caulobacter maris).